The sequence spans 704 residues: Phosphate acetyltransferase (704 aa).

The interval 380-704 is phosphate acetyltransferase; the sequence is FNLIEKAKRN…IQAQAEKGLI (325 aa).

In the N-terminal section; belongs to the CobB/CobQ family. This sequence in the C-terminal section; belongs to the phosphate acetyltransferase and butyryltransferase family. As to quaternary structure, homohexamer.

It is found in the cytoplasm. It catalyses the reaction acetyl-CoA + phosphate = acetyl phosphate + CoA. It functions in the pathway metabolic intermediate biosynthesis; acetyl-CoA biosynthesis; acetyl-CoA from acetate: step 2/2. Involved in acetate metabolism. This chain is Phosphate acetyltransferase (pta), found in Nitratidesulfovibrio vulgaris (strain ATCC 29579 / DSM 644 / CCUG 34227 / NCIMB 8303 / VKM B-1760 / Hildenborough) (Desulfovibrio vulgaris).